A 442-amino-acid polypeptide reads, in one-letter code: MENAKMNSLIAQYPLVKDLVALKETTWFNPGTTSLAEGLPYVGLTEQDVQDAHARLSRFAPYLAKAFPETAATGGIIESELVAIPAMQKRLEKEYQQPISGQLLLKKDSHLPISGSIKARGGIYEVLAHAEKLALEAGLLTLDDDYSKLLSPEFKQFFSQYSIAVGSTGNLGLSIGIMSARIGFKVTVHMSADARAWKKAKLRSHGVTVVEYEQDYGVAVEEGRKAAQSDPNCFFIDDENSRTLFLGYSVAGQRLKAQFAQQGRIVDADNPLFVYLPCGVGGGPGGVAFGLKLAFGDHVHCFFAEPTHSPCMLLGVHTGLHDQISVQDIGIDNLTAADGLAVGRASGFVGRAMERLLDGFYTLSDQTMYDMLGWLAQEEGIRLEPSALAGMAGPQRVCASVSYQQMHGFSAEQLRNATHLVWATGGGMVPEEEMNQYLAKGR.

The residue at position 118 (lysine 118) is an N6-(pyridoxal phosphate)lysine.

Belongs to the serine/threonine dehydratase family. DsdA subfamily. In terms of assembly, monomer. Pyridoxal 5'-phosphate serves as cofactor.

The catalysed reaction is D-serine = pyruvate + NH4(+). This Escherichia coli O139:H28 (strain E24377A / ETEC) protein is D-serine dehydratase.